The following is a 292-amino-acid chain: Proteasome subunit beta 2 (292 aa).

Positions 1 to 59 (MTVDRAPRITDGDTRLSFGSNLSSFSEYLRVHAPEHLPQNRFADTGGVVMGGGDVAPHG) are cleaved as a propeptide — removed in mature form; by autocatalysis. Thr-60 acts as the Nucleophile in catalysis.

The protein belongs to the peptidase T1B family. As to quaternary structure, the 20S proteasome core is composed of 14 alpha and 14 beta subunits that assemble into four stacked heptameric rings, resulting in a barrel-shaped structure. The two inner rings, each composed of seven catalytic beta subunits, are sandwiched by two outer rings, each composed of seven alpha subunits. All four combinations of alpha- and beta-subunits (beta2-alpha1, beta2-alpha2, beta1-alpha2 and beta1-alpha1) yield fully assembled and proteolytically active proteasomes. The catalytic chamber with the active sites is on the inside of the barrel. Has probably a gated structure, the ends of the cylinder being occluded by the N-termini of the alpha-subunits. Is likely capped by the proteasome-associated ATPase, ARC.

The protein resides in the cytoplasm. It catalyses the reaction Cleavage of peptide bonds with very broad specificity.. The protein operates within protein degradation; proteasomal Pup-dependent pathway. Its activity is regulated as follows. The formation of the proteasomal ATPase ARC-20S proteasome complex, likely via the docking of the C-termini of ARC into the intersubunit pockets in the alpha-rings, may trigger opening of the gate for substrate entry. Interconversion between the open-gate and close-gate conformations leads to a dynamic regulation of the 20S proteasome proteolysis activity. In terms of biological role, component of the proteasome core, a large protease complex with broad specificity involved in protein degradation. The R.erythropolis proteasomes are able to cleave oligopeptides after Tyr, Phe and Leu, very poorly after Arg but not after Glu. Thus, displays chymotrypsin-like activity, low trypsin-like activity but no caspase-like activity. The chain is Proteasome subunit beta 2 from Rhodococcus erythropolis (Arthrobacter picolinophilus).